Here is a 570-residue protein sequence, read N- to C-terminus: Formate--tetrahydrofolate ligase (570 aa).

Residue Thr-65 to Thr-72 coordinates ATP.

The protein belongs to the formate--tetrahydrofolate ligase family.

It carries out the reaction (6S)-5,6,7,8-tetrahydrofolate + formate + ATP = (6R)-10-formyltetrahydrofolate + ADP + phosphate. Its pathway is one-carbon metabolism; tetrahydrofolate interconversion. This chain is Formate--tetrahydrofolate ligase, found in Shewanella sediminis (strain HAW-EB3).